A 104-amino-acid polypeptide reads, in one-letter code: Large ribosomal subunit protein uL23 (104 aa).

It belongs to the universal ribosomal protein uL23 family. In terms of assembly, part of the 50S ribosomal subunit. Contacts protein L29, and trigger factor when it is bound to the ribosome.

In terms of biological role, one of the early assembly proteins it binds 23S rRNA. One of the proteins that surrounds the polypeptide exit tunnel on the outside of the ribosome. Forms the main docking site for trigger factor binding to the ribosome. In Ralstonia pickettii (strain 12J), this protein is Large ribosomal subunit protein uL23.